Reading from the N-terminus, the 1049-residue chain is ABC transporter ATM1 (1049 aa).

The N-terminal 90 residues, 1-90 (MRSFYNKCFT…NIFKNKGRLY (90 aa)), are a transit peptide targeting the mitochondrion. The next 6 membrane-spanning stretches (helical) occupy residues 357–377 (IFCS…TPIL), 397–419 (IYST…VLSS), 481–501 (VMVF…YILT), 506–526 (YTVS…TTLI), 591–611 (FLNF…MYLT), and 619–639 (IFPF…AMPL). Residues 360–651 (SLFFLLCSKM…FGTIYRETKL (292 aa)) form the ABC transmembrane type-1 domain. An ABC transporter domain is found at 807-1043 (LKNHKIINNS…NHFYREYYDS (237 aa)). Residue 843 to 850 (GKSGSGKS) coordinates ATP.

It belongs to the ABC transporter superfamily. ABCB family. Heavy Metal importer (TC 3.A.1.210) subfamily. In terms of assembly, homodimer. Interacts with ISCU. Interacts with IscA2. Interacts with NBP35. Interacts with mHCF101.

It localises to the mitochondrion membrane. Its activity is regulated as follows. ATPase activity is stimulated by reduced glutathione. Transports glutathione-coordinated [4Fe-4S] iron-sulfur clusters in an ATP-dependent manner. Required for optimal parasite growth during erythrocytic stages. The sequence is that of ABC transporter ATM1 from Plasmodium falciparum (isolate 3D7).